The following is a 168-amino-acid chain: Ribosome maturation factor RimM (168 aa).

In terms of domain architecture, PRC barrel spans 96–168; it reads VDEYYWGDLI…TIRVDWQKDW (73 aa).

Belongs to the RimM family. In terms of assembly, binds ribosomal protein uS19.

The protein resides in the cytoplasm. Its function is as follows. An accessory protein needed during the final step in the assembly of 30S ribosomal subunit, possibly for assembly of the head region. Essential for efficient processing of 16S rRNA. May be needed both before and after RbfA during the maturation of 16S rRNA. It has affinity for free ribosomal 30S subunits but not for 70S ribosomes. This is Ribosome maturation factor RimM from Aromatoleum aromaticum (strain DSM 19018 / LMG 30748 / EbN1) (Azoarcus sp. (strain EbN1)).